A 149-amino-acid polypeptide reads, in one-letter code: UPF0260 protein PFLU_1520 (149 aa).

The protein belongs to the UPF0260 family.

This chain is UPF0260 protein PFLU_1520, found in Pseudomonas fluorescens (strain SBW25).